The following is a 268-amino-acid chain: Syntaxin-22 (268 aa).

The interval 1-23 is disordered; the sequence is MSFQDLESGRGRSTRKFNGGRQD. At Ser-2 the chain carries N-acetylserine. Residues 2 to 246 lie on the Cytoplasmic side of the membrane; it reads SFQDLESGRG…AAKTQKSNSS (245 aa). One can recognise a t-SNARE coiled-coil homology domain in the interval 175–237; it reads EAVIEEREQG…SQGKSQLVQA (63 aa). A helical; Anchor for type IV membrane protein transmembrane segment spans residues 247–267; that stretch reads LTCLLLVIFGIVLLIVIIVLA. A topological domain (vesicular) is located at residue Ala-268.

The protein belongs to the syntaxin family. As to quaternary structure, interacts with VTI11 and SYP51 to form a t-SNARE complex, but not with VPS45. As to expression, expressed in roots, leaves, stems, flower and green siliques.

The protein resides in the prevacuolar compartment membrane. It is found in the vacuole membrane. In terms of biological role, may provide the t-SNARE function in the vacuolar assembly. Promotes the formation of vacuolar membrane 'bulbs'. Required for inflorescence stem gravitropism. This Arabidopsis thaliana (Mouse-ear cress) protein is Syntaxin-22 (SYP22).